Reading from the N-terminus, the 232-residue chain is BTB/POZ domain-containing protein KCTD11 (232 aa).

Residues 1–49 form the BTB domain; the sequence is MLGAMFRADTLMPANLNPQGDGHYFIDRDGKAFRHILNFLRLGRLDLPR.

Homopentamer. Interacts with KCTD6 and KCTD21; KCTD11 and KCTD6 or KCTD21 may associate in pentameric assemblies. Component of the BCR(KCTD11) E3 ubiquitin ligase complex, at least composed of CUL3 and KCTD11 and RBX1. Interacts (via BTB domain) with CUL3; initially a 4:4 stoichiometry has been reported, however, electron microscopy revealed pentameric states of the BTB domain. Weakly expressed in lung. In the cerebellum, higher expression in non proliferating external granule cells layer than in highly proliferating ones.

It functions in the pathway protein modification; protein ubiquitination. Functionally, plays a role as a marker and a regulator of neuronal differentiation; Up-regulated by a variety of neurogenic signals, such as retinoic acid, epidermal growth factor/EGF and NGFB/nerve growth factor. Induces apoptosis, growth arrest and the expression of cyclin-dependent kinase inhibitor CDKN1B. Plays a role as a tumor repressor and inhibits cell growth and tumorigenicity of medulloblastoma (MDB). Acts as a probable substrate-specific adapter for a BCR (BTB-CUL3-RBX1) E3 ubiquitin-protein ligase complex towards HDAC1. Functions as antagonist of the Hedgehog pathway on cell proliferation and differentiation by affecting the nuclear transfer of transcription factor GLI1, thus maintaining cerebellar granule cells in undifferentiated state, this effect probably occurs via HDAC1 down-regulation, keeping GLI1 acetylated and inactive. When knock-down, Hedgehog antagonism is impaired and proliferation of granule cells is sustained. Activates the caspase cascade. This chain is BTB/POZ domain-containing protein KCTD11 (Kctd11), found in Mus musculus (Mouse).